Reading from the N-terminus, the 408-residue chain is NADH-quinone oxidoreductase subunit H (408 aa).

9 consecutive transmembrane segments (helical) span residues 18–38, 84–104, 124–144, 165–185, 198–218, 261–281, 288–308, 321–341, and 353–373; these read LAKA…AILI, PIYL…FSVI, LPVA…GIVL, VVSY…YAGT, TWFV…MVGE, SALA…FNLI, WWPL…YFWL, MALG…VVAI, and WAAW…WGLA. The tract at residues 381 to 408 is disordered; the sequence is VQPPPPQSTGAYPVPPLPSVGTKETADA. Pro residues predominate over residues 382-398; the sequence is QPPPPQSTGAYPVPPLP.

The protein belongs to the complex I subunit 1 family. NDH-1 is composed of 14 different subunits. Subunits NuoA, H, J, K, L, M, N constitute the membrane sector of the complex.

It is found in the cell membrane. It carries out the reaction a quinone + NADH + 5 H(+)(in) = a quinol + NAD(+) + 4 H(+)(out). Its function is as follows. NDH-1 shuttles electrons from NADH, via FMN and iron-sulfur (Fe-S) centers, to quinones in the respiratory chain. The immediate electron acceptor for the enzyme in this species is believed to be menaquinone. Couples the redox reaction to proton translocation (for every two electrons transferred, four hydrogen ions are translocated across the cytoplasmic membrane), and thus conserves the redox energy in a proton gradient. This subunit may bind ubiquinone. The polypeptide is NADH-quinone oxidoreductase subunit H (Mycolicibacterium smegmatis (strain ATCC 700084 / mc(2)155) (Mycobacterium smegmatis)).